Here is a 1023-residue protein sequence, read N- to C-terminus: NRPS-like oxidoreductase fscA (1023 aa).

Residues 54-454 (TYGDLNGMAT…NHPFVRQCMV (401 aa)) form an adenylation region. In terms of domain architecture, Carrier spans 554–637 (PEDDVIGRQI…SIANHVRSAQ (84 aa)). Ser-596 is modified (O-(pantetheine 4'-phosphoryl)serine). In terms of domain architecture, Thioester reductase (TE) spans 685-901 (LTGGAGYLGQ…VYDESTTRAR (217 aa)).

The protein belongs to the NRP synthetase family. Pantetheine 4'-phosphate is required as a cofactor.

It participates in secondary metabolite biosynthesis. Its function is as follows. NRPS-like oxidoreductasee; part of the fragmented gene cluster that mediates the biosynthesis of fusarochromene, a tryptophan-derived metabolite closely related to a group of mycotoxins including fusarochromanone. Within the pathway, fscA acts as an oxidoreductase that reduces the carboxyl group of 4-hydroxykyrunenine to primary alcohol. The first step of the pathway is the epimerization of L-tryptophan to D-tryptophan in the presence of the NRPS-like tryptophan epimerase fscC. D-tryptophan is subsequently hydroxylated by the tryptophan 6-hydroxylase fscE to yield 6-hydroxytryptophan. The pyrrole ring undergoes cleavaged by the tryptophan 2,3-dioxygenase fscD and is finally converted to 4-hydroxykyrunenine by the hydrolase fscH. The NRPS-like oxidoreductase fscA reduces the carboxyl group to primary alcohol and the DMATS-type prenyltransferase fscG performs prenylation, followed by the formation of a chromene ring catalyzed by the oxidoreductase fscI, which leads to desacetylfusarochromene. Epoxidation by fscF and rearrangement reactions of chromene double bonds convert compound desacetylfusarochromene to fusarochromanones. Although specific acetyltransferases were not found near the fsc gene cluster, several predicted enzymes containing the N-acetyltransferase superfamily domain are present in the genome of F.equiseti. These predicted enzymes may have the potential to convert desacetylfusarochromene to fusarochromene. In Fusarium equiseti (Fusarium scirpi), this protein is NRPS-like oxidoreductase fscA.